A 546-amino-acid polypeptide reads, in one-letter code: ATP synthase subunit alpha (546 aa).

An ATP-binding site is contributed by Gly-173–Thr-180. The disordered stretch occupies residues Val-520–Lys-546. The span at Glu-535–Lys-546 shows a compositional bias: basic and acidic residues.

Belongs to the ATPase alpha/beta chains family. F-type ATPases have 2 components, CF(1) - the catalytic core - and CF(0) - the membrane proton channel. CF(1) has five subunits: alpha(3), beta(3), gamma(1), delta(1), epsilon(1). CF(0) has three main subunits: a(1), b(2) and c(9-12). The alpha and beta chains form an alternating ring which encloses part of the gamma chain. CF(1) is attached to CF(0) by a central stalk formed by the gamma and epsilon chains, while a peripheral stalk is formed by the delta and b chains.

It localises to the cell membrane. It carries out the reaction ATP + H2O + 4 H(+)(in) = ADP + phosphate + 5 H(+)(out). Produces ATP from ADP in the presence of a proton gradient across the membrane. The alpha chain is a regulatory subunit. The chain is ATP synthase subunit alpha from Bifidobacterium animalis subsp. lactis (strain AD011).